Here is a 587-residue protein sequence, read N- to C-terminus: Formate--tetrahydrofolate ligase (587 aa).

73–80 is a binding site for ATP; it reads TPLGEGKS.

This sequence belongs to the formate--tetrahydrofolate ligase family.

The enzyme catalyses (6S)-5,6,7,8-tetrahydrofolate + formate + ATP = (6R)-10-formyltetrahydrofolate + ADP + phosphate. Its pathway is one-carbon metabolism; tetrahydrofolate interconversion. The protein is Formate--tetrahydrofolate ligase of Syntrophobacter fumaroxidans (strain DSM 10017 / MPOB).